The chain runs to 349 residues: Heat-inducible transcription repressor HrcA (349 aa).

It belongs to the HrcA family.

In terms of biological role, negative regulator of class I heat shock genes (grpE-dnaK-dnaJ and groELS operons). Prevents heat-shock induction of these operons. In Xylella fastidiosa (strain M23), this protein is Heat-inducible transcription repressor HrcA.